We begin with the raw amino-acid sequence, 356 residues long: L-lactate dehydrogenase A (356 aa).

Residues 75–80 and Arg121 contribute to the NAD(+) site; that span reads DALPDK. Substrate-binding residues include Arg128, Asn160, and Arg191. Asn160 serves as a coordination point for NAD(+). Residue His215 is the Proton acceptor of the active site. Thr270 lines the substrate pocket.

It belongs to the LDH/MDH superfamily. LDH family. Tetramer that arise from random association of LDH-A and LDH-B.

The enzyme catalyses (S)-lactate + NAD(+) = pyruvate + NADH + H(+). Its pathway is fermentation; pyruvate fermentation to lactate; (S)-lactate from pyruvate: step 1/1. The sequence is that of L-lactate dehydrogenase A from Hordeum vulgare (Barley).